A 265-amino-acid polypeptide reads, in one-letter code: Cytochrome c oxidase subunit 3 (265 aa).

The next 6 helical transmembrane spans lie at 16 to 36 (PWPF…ILWL), 40 to 60 (PSFL…FSWW), 83 to 103 (CVAL…WTFF), 159 to 179 (VGPF…FLVQ), 198 to 218 (VFYL…IWLM), and 241 to 261 (IWYW…VYVW).

Belongs to the cytochrome c oxidase subunit 3 family. Component of the cytochrome c oxidase (complex IV, CIV), a multisubunit enzyme composed of a catalytic core of 3 subunits and several supernumerary subunits. The complex exists as a monomer or a dimer and forms supercomplexes (SCs) in the inner mitochondrial membrane with ubiquinol-cytochrome c oxidoreductase (cytochrome b-c1 complex, complex III, CIII).

The protein localises to the mitochondrion inner membrane. The enzyme catalyses 4 Fe(II)-[cytochrome c] + O2 + 8 H(+)(in) = 4 Fe(III)-[cytochrome c] + 2 H2O + 4 H(+)(out). Functionally, component of the cytochrome c oxidase, the last enzyme in the mitochondrial electron transport chain which drives oxidative phosphorylation. The respiratory chain contains 3 multisubunit complexes succinate dehydrogenase (complex II, CII), ubiquinol-cytochrome c oxidoreductase (cytochrome b-c1 complex, complex III, CIII) and cytochrome c oxidase (complex IV, CIV), that cooperate to transfer electrons derived from NADH and succinate to molecular oxygen, creating an electrochemical gradient over the inner membrane that drives transmembrane transport and the ATP synthase. Cytochrome c oxidase is the component of the respiratory chain that catalyzes the reduction of oxygen to water. Electrons originating from reduced cytochrome c in the intermembrane space (IMS) are transferred via the dinuclear copper A center (CU(A)) of subunit 2 and heme A of subunit 1 to the active site in subunit 1, a binuclear center (BNC) formed by heme A3 and copper B (CU(B)). The BNC reduces molecular oxygen to 2 water molecules using 4 electrons from cytochrome c in the IMS and 4 protons from the mitochondrial matrix. In Mytilus edulis (Blue mussel), this protein is Cytochrome c oxidase subunit 3 (COIII).